The chain runs to 395 residues: Acetate kinase (395 aa).

Asn-7 provides a ligand contact to Mg(2+). Residue Lys-14 participates in ATP binding. Residue Arg-85 participates in substrate binding. Residue Asp-142 is the Proton donor/acceptor of the active site. ATP is bound by residues 202-206 (HLGNG), 277-279 (DMR), and 325-329 (GIGEN). Glu-378 lines the Mg(2+) pocket.

It belongs to the acetokinase family. As to quaternary structure, homodimer. Mg(2+) serves as cofactor. It depends on Mn(2+) as a cofactor.

The protein localises to the cytoplasm. It carries out the reaction acetate + ATP = acetyl phosphate + ADP. The protein operates within metabolic intermediate biosynthesis; acetyl-CoA biosynthesis; acetyl-CoA from acetate: step 1/2. In terms of biological role, catalyzes the formation of acetyl phosphate from acetate and ATP. Can also catalyze the reverse reaction. This Deinococcus geothermalis (strain DSM 11300 / CIP 105573 / AG-3a) protein is Acetate kinase.